The primary structure comprises 451 residues: Bacteriochlorophyllide d C-8(2)-methyltransferase (451 aa).

The B12-binding domain occupies 1–118; sequence MDDDSNQKPL…DDVANNRLKE (118 aa). The Radical SAM core domain maps to 148–377; sequence VDGTKSIPIY…ALHLVIKSDR (230 aa). Cysteine 162, cysteine 166, and cysteine 169 together coordinate [4Fe-4S] cluster.

It belongs to the radical SAM superfamily. [4Fe-4S] cluster is required as a cofactor.

The protein resides in the cytoplasm. It carries out the reaction 8,12-diethyl-3-vinylbacteriochlorophyllide d + S-adenosyl-L-methionine = 12-ethyl-8-propyl-3-vinylbacteriochlorophyllide d + S-adenosyl-L-homocysteine + H(+). The catalysed reaction is 12-ethyl-8-propyl-3-vinylbacteriochlorophyllide d + S-adenosyl-L-methionine = 12-ethyl-8-isobutyl-3-vinylbacteriochlorophyllide d + S-adenosyl-L-homocysteine + H(+). It participates in porphyrin-containing compound metabolism; bacteriochlorophyll biosynthesis (light-independent). Involved in the biosynthesis of the major light-harvesting pigment bacteriochlorophyll c (BChlc), which confers a significant competitive advantage to green sulfur bacteria living at limiting red and near-infrared light intensities. BchQ is a methyltransferase that adds two consecutive methyl groups to the ethyl carbon at the C-8(2) position of 8,12-diethyl-3-vinylbacteriochlorophyllide d to yield 12-ethyl-8-isobutyl-3-vinylbacteriochlorophyllide d. This is Bacteriochlorophyllide d C-8(2)-methyltransferase from Chlorobaculum tepidum (strain ATCC 49652 / DSM 12025 / NBRC 103806 / TLS) (Chlorobium tepidum).